Reading from the N-terminus, the 745-residue chain is ATP-dependent zinc metalloprotease FtsH (745 aa).

At 1-11 the chain is on the cytoplasmic side; the sequence is MNNRRNGLFRN. The helical transmembrane segment at 12 to 32 threads the bilayer; the sequence is SLFYILMFLSLMGIIYFFFGG. The Extracellular segment spans residues 33–131; sequence NSGSQTQNIR…VTAKAEESSG (99 aa). Residues 132–152 form a helical membrane-spanning segment; that stretch reads IWVTLLMYIAPVILMLFLFYM. The Cytoplasmic portion of the chain corresponds to 153–745; sequence MMGQAGQGGG…SSQDDTNSQA (593 aa). Position 227–234 (227–234) interacts with ATP; that stretch reads GPPGTGKT. H449 contacts Zn(2+). E450 is an active-site residue. Residues H453 and D525 each contribute to the Zn(2+) site. Residues 630–673 show a composition bias toward basic and acidic residues; the sequence is MPEKDSNEFPSEKAATFEESKRELERREAEKHAQNQSADDKQAD. Residues 630-745 are disordered; that stretch reads MPEKDSNEFP…SSQDDTNSQA (116 aa). Residues 690 to 704 are compositionally biased toward low complexity; the sequence is SESDASSEVSADSSV. A compositionally biased stretch (polar residues) spans 705-745; the sequence is NSTANSATESATDSDVATSATGLPNAESATPSSQDDTNSQA.

It in the central section; belongs to the AAA ATPase family. The protein in the C-terminal section; belongs to the peptidase M41 family. In terms of assembly, homohexamer. Requires Zn(2+) as cofactor.

The protein resides in the cell membrane. Its function is as follows. Acts as a processive, ATP-dependent zinc metallopeptidase for both cytoplasmic and membrane proteins. Plays a role in the quality control of integral membrane proteins. In Lactiplantibacillus plantarum (strain ATCC BAA-793 / NCIMB 8826 / WCFS1) (Lactobacillus plantarum), this protein is ATP-dependent zinc metalloprotease FtsH.